Here is a 540-residue protein sequence, read N- to C-terminus: Esterase B1 (540 aa).

Cysteines 68 and 81 form a disulfide. The active-site Acyl-ester intermediate is the Ser191. Residues Glu324 and His442 each act as charge relay system in the active site. The N-linked (GlcNAc...) asparagine glycan is linked to Asn452.

This sequence belongs to the type-B carboxylesterase/lipase family.

It catalyses the reaction a carboxylic ester + H2O = an alcohol + a carboxylate + H(+). Overproduction of nonspecific esterases is a common mechanism of resistance to organophosphate insecticides. This Culex pipiens (House mosquito) protein is Esterase B1 (B1).